Consider the following 242-residue polypeptide: Probable transcriptional regulatory protein Bphyt_1301 (242 aa).

It belongs to the TACO1 family.

It is found in the cytoplasm. The sequence is that of Probable transcriptional regulatory protein Bphyt_1301 from Paraburkholderia phytofirmans (strain DSM 17436 / LMG 22146 / PsJN) (Burkholderia phytofirmans).